The following is a 1136-amino-acid chain: Unconventional myosin-Ib (1136 aa).

One can recognise a Myosin motor domain in the interval 15–701 (IGVGDMVLLE…TLFKLEDLRK (687 aa)). The residue at position 60 (Ser-60) is a Phosphoserine. 108 to 115 (GESGAGKT) is an ATP binding site. Lys-287 is covalently cross-linked (Glycyl lysine isopeptide (Lys-Gly) (interchain with G-Cter in SUMO1); alternate). Lys-287 is covalently cross-linked (Glycyl lysine isopeptide (Lys-Gly) (interchain with G-Cter in SUMO2); alternate). Residues 578–600 (VATLMKNLQTKNPNYIRCIKPND) are actin-binding. IQ domains are found at residues 704 to 733 (LEDLATLIQKIYRGWKCRTHFLLMKKSQIV), 728 to 748 (KKSQIVIAAWYRRYAQQKRYQ), 750 to 779 (TKSSALVIQSYIRGWKARKILRELKHQKRC), 779 to 808 (CKEAVTTIAAYWHGTQARRELRRLKEEARN), 808 to 837 (NKHAIAVIWAYWLGSKARRELKRLKEEARR), and 837 to 866 (RKHAVAVIWAYWLGLKVRREYRKFFRANAG). The TH1 domain maps to 952 to 1136 (KALYPSSVGQ…NNRLLEVAVP (185 aa)).

Belongs to the TRAFAC class myosin-kinesin ATPase superfamily. Myosin family.

Functionally, motor protein that may participate in process critical to neuronal development and function such as cell migration, neurite outgrowth and vesicular transport. The chain is Unconventional myosin-Ib (MYO1B) from Homo sapiens (Human).